The primary structure comprises 141 residues: Hemoglobin subunit alpha-2 (141 aa).

Positions 1–141 (VLTEDDKNHV…VCKDLVSKYR (141 aa)) constitute a Globin domain. Histidine 58 provides a ligand contact to O2. Heme b is bound at residue histidine 87.

It belongs to the globin family. As to quaternary structure, the major hemoglobin component (HbIII) is a heterotetramer of two alpha-2 chains and two beta-1 chains. Red blood cells.

Involved in oxygen transport from the lung to the various peripheral tissues. The protein is Hemoglobin subunit alpha-2 of Varanus albigularis (White-throated monitor).